The sequence spans 416 residues: Adenylosuccinate synthetase (416 aa).

Residues 13 to 19 (GDEGKGK) and 41 to 43 (GHT) contribute to the GTP site. Residue aspartate 14 is the Proton acceptor of the active site. Residues aspartate 14 and glycine 41 each contribute to the Mg(2+) site. IMP contacts are provided by residues 14-17 (DEGK), 39-42 (NAGH), threonine 126, arginine 140, glutamine 220, threonine 235, and arginine 299. The Proton donor role is filled by histidine 42. 295–301 (TTTGRKR) contacts substrate. GTP is bound by residues arginine 301, 327–329 (KLD), and 405–407 (STS).

The protein belongs to the adenylosuccinate synthetase family. Homodimer. Requires Mg(2+) as cofactor.

The protein localises to the cytoplasm. The catalysed reaction is IMP + L-aspartate + GTP = N(6)-(1,2-dicarboxyethyl)-AMP + GDP + phosphate + 2 H(+). It functions in the pathway purine metabolism; AMP biosynthesis via de novo pathway; AMP from IMP: step 1/2. Plays an important role in the de novo pathway of purine nucleotide biosynthesis. Catalyzes the first committed step in the biosynthesis of AMP from IMP. The chain is Adenylosuccinate synthetase from Campylobacter fetus subsp. fetus (strain 82-40).